Reading from the N-terminus, the 160-residue chain is Transcription elongation factor GreA (160 aa).

Positions 3-84 form a coiled coil; it reads SIVNDKILLT…SKAKIIKADL (82 aa).

It belongs to the GreA/GreB family.

Its function is as follows. Necessary for efficient RNA polymerase transcription elongation past template-encoded arresting sites. The arresting sites in DNA have the property of trapping a certain fraction of elongating RNA polymerases that pass through, resulting in locked ternary complexes. Cleavage of the nascent transcript by cleavage factors such as GreA or GreB allows the resumption of elongation from the new 3'terminus. GreA releases sequences of 2 to 3 nucleotides. The sequence is that of Transcription elongation factor GreA from Mesomycoplasma hyopneumoniae (strain 7448) (Mycoplasma hyopneumoniae).